The following is a 156-amino-acid chain: Ribosomal RNA large subunit methyltransferase H (156 aa).

Residues L73, G104, and 123–128 (LSPLTF) each bind S-adenosyl-L-methionine.

Belongs to the RNA methyltransferase RlmH family. Homodimer.

The protein localises to the cytoplasm. It carries out the reaction pseudouridine(1915) in 23S rRNA + S-adenosyl-L-methionine = N(3)-methylpseudouridine(1915) in 23S rRNA + S-adenosyl-L-homocysteine + H(+). Its function is as follows. Specifically methylates the pseudouridine at position 1915 (m3Psi1915) in 23S rRNA. This Thioalkalivibrio sulfidiphilus (strain HL-EbGR7) protein is Ribosomal RNA large subunit methyltransferase H.